A 356-amino-acid polypeptide reads, in one-letter code: Peptide chain release factor 1 (356 aa).

Position 233 is an N5-methylglutamine (glutamine 233).

Belongs to the prokaryotic/mitochondrial release factor family. Post-translationally, methylated by PrmC. Methylation increases the termination efficiency of RF1.

The protein localises to the cytoplasm. In terms of biological role, peptide chain release factor 1 directs the termination of translation in response to the peptide chain termination codons UAG and UAA. This chain is Peptide chain release factor 1, found in Halalkalibacterium halodurans (strain ATCC BAA-125 / DSM 18197 / FERM 7344 / JCM 9153 / C-125) (Bacillus halodurans).